The primary structure comprises 503 residues: U6 snRNA (guanine-N(2))-methyltransferase THUMPD2 (503 aa).

Positions C161–V266 constitute a THUMP domain.

It belongs to the methyltransferase superfamily. As to quaternary structure, part of the heterodimeric THUMPD2-TRM112 methyltransferase complex; this complex forms an active tRNA methyltransferase, where TRMT112 acts as an activator of the catalytic subunit THUMPD2. In terms of tissue distribution, expressed in a variety of tissues including brain, colon, gingiva, heart, kidney, liver, lung, placenta, small intestine, spleen and thymus.

It localises to the nucleus. The enzyme catalyses guanosine in U6 snRNA + S-adenosyl-L-methionine = N(2)-methylguanosine in U6 snRNA + S-adenosyl-L-homocysteine + H(+). Its function is as follows. Catalytic subunit of the THUMPD2-TRM112 methyltransferase complex, that specifically mediates the S-adenosyl-L-methionine-dependent N(2)-methylation of guanosine nucleotides, most probably at position 72 (m2G72), in the U6snRNA of the major spliceosome. This modification in the U6 snRNA affects the constitutive splicing efficiency of introns that have suboptimal splice sites and can impact final mRNA levels. The sequence is that of U6 snRNA (guanine-N(2))-methyltransferase THUMPD2 from Homo sapiens (Human).